The sequence spans 250 residues: Small ribosomal subunit protein uS3z (250 aa).

A KH type-2 domain is found at 21-92 (LNEVLTRELA…SVELYAEKVN (72 aa)).

Belongs to the universal ribosomal protein uS3 family. Interacts with SNRNP35.

This Arabidopsis thaliana (Mouse-ear cress) protein is Small ribosomal subunit protein uS3z (RPS3A).